The following is a 260-amino-acid chain: Indole-3-glycerol phosphate synthase (260 aa).

Belongs to the TrpC family.

It catalyses the reaction 1-(2-carboxyphenylamino)-1-deoxy-D-ribulose 5-phosphate + H(+) = (1S,2R)-1-C-(indol-3-yl)glycerol 3-phosphate + CO2 + H2O. The protein operates within amino-acid biosynthesis; L-tryptophan biosynthesis; L-tryptophan from chorismate: step 4/5. The protein is Indole-3-glycerol phosphate synthase of Ruminiclostridium cellulolyticum (strain ATCC 35319 / DSM 5812 / JCM 6584 / H10) (Clostridium cellulolyticum).